The primary structure comprises 1208 residues: Period circadian protein (1208 aa).

Disordered stretches follow at residues 1 to 171 (MEGG…AAQS) and 214 to 235 (GPGK…TGQR). Low complexity predominate over residues 16–47 (SDSAYSNSCSNSQSQRSGSSKSRLSGSHSSGS). A Nuclear localization signal motif is present at residues 66-79 (KRNKDKSRKKKKNK). Basic residues predominate over residues 66–79 (KRNKDKSRKKKKNK). Basic and acidic residues-rich tracts occupy residues 129-139 (QHGEDHSEPKA) and 147-164 (EGDR…ENAA). Over residues 217 to 232 (KVEPVPGVPGTAAAGT) the composition is skewed to low complexity. PAS domains lie at 242 to 377 (ESFC…ATPI) and 395 to 501 (FAIR…RVFQ). Disordered stretches follow at residues 636–747 (VTAP…SSNY), 802–821 (EYSG…WEGE), 961–982 (TSPT…EMPT), and 1076–1208 (VTTP…HGDG). Polar residues predominate over residues 679 to 697 (NFTTASNIHMSSVTNTSIA). 17 consecutive repeat copies span residues 698–699 (GT), 701–702 (GT), 703–704 (GT), 705–706 (GT), 707–708 (GT), 709–710 (GT), 711–712 (GT), 713–714 (GT), 715–716 (GT), 717–718 (GT), 719–720 (GT), 721–722 (GT), 723–724 (GT), 725–726 (GT), 727–728 (GT), 729–730 (GT), and 731–732 (GN). A compositionally biased stretch (gly residues) spans 698–740 (GTGGTGTGTGTGTGTGTGTGTGTGTGTGTGTGTGNGTNSGTGT). The tract at residues 698–742 (GTGGTGTGTGTGTGTGTGTGTGTGTGTGTGTGTGNGTNSGTGTGS) is 21 X 2 AA approximate tandem repeats of G-[TN]. Residues 734 to 735 (TN) form an 18; approximate repeat. 2 consecutive repeat copies span residues 737–738 (GT) and 739–740 (GT). A 21; approximate repeat occupies 741-742 (GS). Residues 1076-1092 (VTTPSQVQRSSSQSASV) show a composition bias toward low complexity. Polar residues predominate over residues 1127–1138 (LPCSSSNPANNK). Residues 1142–1161 (DSNGNSDDMDGSSFSSFYSS) are compositionally biased toward low complexity. Residues 1193-1208 (KIMEHPEEDQTQHGDG) are compositionally biased toward basic and acidic residues.

Forms a heterodimer with timeless (TIM); the complex then translocates into the nucleus. Phosphorylated with a circadian rhythmicity, probably by the double-time protein (dbt). Phosphorylation could be implicated in the stability of per monomer and in the formation of heterodimer per-tim.

Its subcellular location is the nucleus. The protein resides in the cytoplasm. The protein localises to the perinuclear region. In terms of biological role, essential for biological clock functions. Determines the period length of circadian and ultradian rhythms; an increase in PER dosage leads to shortened circadian rhythms and a decrease leads to lengthened circadian rhythms. Essential for the circadian rhythmicity of locomotor activity, eclosion behavior, and for the rhythmic component of the male courtship song that originates in the thoracic nervous system. The biological cycle depends on the rhythmic formation and nuclear localization of the TIM-PER complex. Light induces the degradation of TIM, which promotes elimination of PER. Nuclear activity of the heterodimer coordinatively regulates PER and TIM transcription through a negative feedback loop. Behaves as a negative element in circadian transcriptional loop. Does not appear to bind DNA, suggesting indirect transcriptional inhibition. The polypeptide is Period circadian protein (per) (Drosophila yakuba (Fruit fly)).